Reading from the N-terminus, the 149-residue chain is 3-dehydroquinate dehydratase (149 aa).

Y23 serves as the catalytic Proton acceptor. Substrate is bound by residues N75, H81, and D88. The active-site Proton donor is the H101. Substrate is bound by residues 102-103 and R112; that span reads MS.

The protein belongs to the type-II 3-dehydroquinase family. As to quaternary structure, homododecamer.

It catalyses the reaction 3-dehydroquinate = 3-dehydroshikimate + H2O. It functions in the pathway metabolic intermediate biosynthesis; chorismate biosynthesis; chorismate from D-erythrose 4-phosphate and phosphoenolpyruvate: step 3/7. In terms of biological role, catalyzes a trans-dehydration via an enolate intermediate. The polypeptide is 3-dehydroquinate dehydratase (Pelobacter propionicus (strain DSM 2379 / NBRC 103807 / OttBd1)).